Consider the following 150-residue polypeptide: Large ribosomal subunit protein bL9 (150 aa).

This sequence belongs to the bacterial ribosomal protein bL9 family.

Its function is as follows. Binds to the 23S rRNA. The sequence is that of Large ribosomal subunit protein bL9 from Buchnera aphidicola subsp. Schizaphis graminum (strain Sg).